The sequence spans 201 residues: Ependymin-related protein 2 (201 aa).

The first 21 residues, 1–21, serve as a signal peptide directing secretion; it reads MILQVVLLLACLSGAIVSTGA. N-linked (GlcNAc...) asparagine glycosylation is found at N38 and N137. A Microbody targeting signal motif is present at residues 199-201; it reads CRA.

The protein belongs to the ependymin family. In terms of tissue distribution, component of the acid-soluble and acid-insoluble organic matrix of calcified shell layers (at protein level).

The protein resides in the secreted. This is Ependymin-related protein 2 from Haliotis asinina (Donkey's ear abalone).